The primary structure comprises 163 residues: Peptide deformylase (163 aa).

Positions 91 and 133 each coordinate Fe cation. Residue Glu134 is part of the active site. A Fe cation-binding site is contributed by His137.

It belongs to the polypeptide deformylase family. Fe(2+) is required as a cofactor.

The catalysed reaction is N-terminal N-formyl-L-methionyl-[peptide] + H2O = N-terminal L-methionyl-[peptide] + formate. In terms of biological role, removes the formyl group from the N-terminal Met of newly synthesized proteins. Requires at least a dipeptide for an efficient rate of reaction. N-terminal L-methionine is a prerequisite for activity but the enzyme has broad specificity at other positions. This is Peptide deformylase from Lachnoclostridium phytofermentans (strain ATCC 700394 / DSM 18823 / ISDg) (Clostridium phytofermentans).